A 357-amino-acid polypeptide reads, in one-letter code: MPQTLHVHSRVKDYDILFTDHVLKTLADCLGERKQRKLLFITDQTVYHLYQTLFEEFAQQYNAFVHVCPPGGQTKSLERVSAIYDQLIAENFSKKDMIVTIGGGVVGDLGGFVAATYSRGIPYIQIPTTLLSQVDSSIGGKVGVHFKSLTNMIGSIYPPEAIIISTTFLETLPQREFSCGISEMLKIGFIHDRPLFQQLRDFQKETDKQGLERLIYQSISNKKQIVEQDEFENGLRMSLNFGHTLGHAIESLCHHDFYHHGEAIAIGMVVDAKLAVSKGLLPKEDLDSLLQVFERYQLPTTLERADVSATSLFDVFKTDKKNSEQHIIFILPTETGFTTLAINKDDHQFVEKLDSLL.

Residues 104–108 (GVVGD), 128–129 (TT), Lys-141, and 168–171 (FLET) contribute to the NAD(+) site. Residues Glu-183, His-243, and His-260 each contribute to the Zn(2+) site.

Belongs to the sugar phosphate cyclases superfamily. Dehydroquinate synthase family. Requires Co(2+) as cofactor. Zn(2+) is required as a cofactor. The cofactor is NAD(+).

The protein localises to the cytoplasm. It carries out the reaction 7-phospho-2-dehydro-3-deoxy-D-arabino-heptonate = 3-dehydroquinate + phosphate. The protein operates within metabolic intermediate biosynthesis; chorismate biosynthesis; chorismate from D-erythrose 4-phosphate and phosphoenolpyruvate: step 2/7. Functionally, catalyzes the conversion of 3-deoxy-D-arabino-heptulosonate 7-phosphate (DAHP) to dehydroquinate (DHQ). The polypeptide is 3-dehydroquinate synthase (Streptococcus pyogenes serotype M49 (strain NZ131)).